Here is a 166-residue protein sequence, read N- to C-terminus: NAD(P)H-quinone oxidoreductase subunit I, chloroplastic (166 aa).

2 consecutive 4Fe-4S ferredoxin-type domains span residues 55–84 (GRIHFEFDKCIACEVCVRVCPIDLPVVDWK) and 95–124 (LNYSIDFGICIFCGNCVEYCPTNCLSMTEE). The [4Fe-4S] cluster site is built by C64, C67, C70, C74, C104, C107, C110, and C114.

It belongs to the complex I 23 kDa subunit family. As to quaternary structure, NDH is composed of at least 16 different subunits, 5 of which are encoded in the nucleus. The cofactor is [4Fe-4S] cluster.

The protein resides in the plastid. Its subcellular location is the chloroplast thylakoid membrane. It catalyses the reaction a plastoquinone + NADH + (n+1) H(+)(in) = a plastoquinol + NAD(+) + n H(+)(out). It carries out the reaction a plastoquinone + NADPH + (n+1) H(+)(in) = a plastoquinol + NADP(+) + n H(+)(out). NDH shuttles electrons from NAD(P)H:plastoquinone, via FMN and iron-sulfur (Fe-S) centers, to quinones in the photosynthetic chain and possibly in a chloroplast respiratory chain. The immediate electron acceptor for the enzyme in this species is believed to be plastoquinone. Couples the redox reaction to proton translocation, and thus conserves the redox energy in a proton gradient. The protein is NAD(P)H-quinone oxidoreductase subunit I, chloroplastic of Oblivia mikanioides (Salmea mikanioides).